Reading from the N-terminus, the 442-residue chain is Alpha-1,6-mannosyl-glycoprotein 2-beta-N-acetylglucosaminyltransferase (442 aa).

Over 1-9 the chain is Cytoplasmic; that stretch reads MRFRIYKRK. A helical; Signal-anchor for type II membrane protein membrane pass occupies residues 10–29; sequence VLILTLVVAACGFVLWSSNG. The Lumenal portion of the chain corresponds to 30–442; it reads RQRKSDALGP…ELCKSYRRLQ (413 aa). Asn64 and Asn81 each carry an N-linked (GlcNAc...) asparagine glycan. Residues 118–122 and Asp149 each bind substrate; that span reads QVHNR. Cys191 and Cys205 are joined by a disulfide. Position 224 to 228 (224 to 228) interacts with substrate; that stretch reads QTKHH. Mn(2+) is bound at residue Asp256. A disulfide bond links Cys278 and Cys281. Arg293 serves as a coordination point for substrate. Intrachain disulfides connect Cys329-Cys352, Cys334-Cys435, and Cys373-Cys381. His369 serves as a coordination point for Mn(2+).

Belongs to the glycosyltransferase 16 (GT16) protein family. As to quaternary structure, homodimer. Mn(2+) is required as a cofactor. As to expression, detected in liver, lung, testis, kidney, brain, spleen, thymus, uterus and intestine.

It is found in the golgi apparatus membrane. The catalysed reaction is an N(4)-{beta-D-GlcNAc-(1-&gt;2)-alpha-D-Man-(1-&gt;3)-[alpha-D-Man-(1-&gt;6)]-beta-D-Man-(1-&gt;4)-beta-D-GlcNAc-(1-&gt;4)-beta-D-GlcNAc}-L-asparaginyl-[protein] + UDP-N-acetyl-alpha-D-glucosamine = N(4)-{beta-D-GlcNAc-(1-&gt;2)-alpha-D-Man-(1-&gt;3)-[beta-D-GlcNAc-(1-&gt;2)-alpha-D-Man-(1-&gt;6)]-beta-D-Man-(1-&gt;4)-beta-D-GlcNAc-(1-&gt;4)-beta-D-GlcNAc}-L-asparaginyl-[protein] + UDP + H(+). It functions in the pathway protein modification; protein glycosylation. Its function is as follows. Plays an essential role in protein N-glycosylation. Catalyzes the transfer of N-acetylglucosamine (GlcNAc) onto the free terminal mannose moiety in the core structure of the nascent N-linked glycan chain, giving rise to the second branch in complex glycans. This chain is Alpha-1,6-mannosyl-glycoprotein 2-beta-N-acetylglucosaminyltransferase (Mgat2), found in Mus musculus (Mouse).